Here is a 136-residue protein sequence, read N- to C-terminus: NADPH-dependent 7-cyano-7-deazaguanine reductase (136 aa).

C50 acts as the Thioimide intermediate in catalysis. D57 functions as the Proton donor in the catalytic mechanism. Residues 72–74 (YEL) and 91–92 (HE) each bind substrate.

This sequence belongs to the GTP cyclohydrolase I family. QueF type 1 subfamily.

Its subcellular location is the cytoplasm. It carries out the reaction 7-aminomethyl-7-carbaguanine + 2 NADP(+) = 7-cyano-7-deazaguanine + 2 NADPH + 3 H(+). It participates in tRNA modification; tRNA-queuosine biosynthesis. Its function is as follows. Catalyzes the NADPH-dependent reduction of 7-cyano-7-deazaguanine (preQ0) to 7-aminomethyl-7-deazaguanine (preQ1). The protein is NADPH-dependent 7-cyano-7-deazaguanine reductase of Prochlorococcus marinus (strain MIT 9312).